A 326-amino-acid polypeptide reads, in one-letter code: Nuclear egress protein 1 (326 aa).

The CCCH-type zinc-finger motif lies at 115 to 244; that stretch reads CLSLSGMGYY…YAVFPTKSVH (130 aa).

The protein belongs to the herpesviridae NEC1 protein family. Forms a heterohexameric complex with NEC2. Interacts with capsid vertex specific component 2/CVC2; this interaction directs the capsid to the host inner nuclear membrane to initiate budding. Post-translationally, phosphorylated at serine residues in the N-terminus. This phosphorylation regulates the localization within the inner nuclear membrane.

The protein resides in the host nucleus inner membrane. In terms of biological role, plays an essential role in virion nuclear egress, the first step of virion release from infected cell. Within the host nucleus, NEC1 interacts with the newly formed capsid through the vertexes and directs it to the inner nuclear membrane by associating with NEC2. Induces the budding of the capsid at the inner nuclear membrane as well as its envelopment into the perinuclear space. There, the NEC1/NEC2 complex promotes the fusion of the enveloped capsid with the outer nuclear membrane and the subsequent release of the viral capsid into the cytoplasm where it will reach the secondary budding sites in the host Golgi or trans-Golgi network. The protein is Nuclear egress protein 1 of Equine herpesvirus 1 (strain Ab4p) (EHV-1).